The chain runs to 138 residues: Putative membrane protein insertion efficiency factor (138 aa).

The disordered stretch occupies residues 71–138 (YDPVPGTPEA…GTPSHTRGEN (68 aa)). Over residues 81–113 (RQWRELHPETARSKNEPIHDLTDDNPRDHEPAL) the composition is skewed to basic and acidic residues. The span at 123-138 (PGSTHTGTPSHTRGEN) shows a compositional bias: polar residues.

The protein belongs to the UPF0161 family.

Its subcellular location is the cell membrane. Its function is as follows. Could be involved in insertion of integral membrane proteins into the membrane. The polypeptide is Putative membrane protein insertion efficiency factor (Cutibacterium acnes (strain DSM 16379 / KPA171202) (Propionibacterium acnes)).